An 86-amino-acid chain; its full sequence is Small ribosomal subunit protein bS16 (86 aa).

It belongs to the bacterial ribosomal protein bS16 family.

The chain is Small ribosomal subunit protein bS16 from Mycoplasmoides gallisepticum (strain R(low / passage 15 / clone 2)) (Mycoplasma gallisepticum).